Consider the following 1024-residue polypeptide: Error-prone DNA polymerase (1024 aa).

It belongs to the DNA polymerase type-C family. DnaE2 subfamily.

It is found in the cytoplasm. It carries out the reaction DNA(n) + a 2'-deoxyribonucleoside 5'-triphosphate = DNA(n+1) + diphosphate. Functionally, DNA polymerase involved in damage-induced mutagenesis and translesion synthesis (TLS). It is not the major replicative DNA polymerase. The protein is Error-prone DNA polymerase of Pseudomonas paraeruginosa (strain DSM 24068 / PA7) (Pseudomonas aeruginosa (strain PA7)).